A 95-amino-acid polypeptide reads, in one-letter code: uncharacterized protein (95 aa).

This is an uncharacterized protein from Archaeoglobus fulgidus (strain ATCC 49558 / DSM 4304 / JCM 9628 / NBRC 100126 / VC-16).